A 387-amino-acid chain; its full sequence is GTPase Obg (387 aa).

In terms of domain architecture, Obg spans 1-159 (MKFVDEAIIR…RSLKLELLLL (159 aa)). In terms of domain architecture, OBG-type G spans 160 to 333 (ADVGLLGMPN…LAVKLLDFIA (174 aa)). GTP contacts are provided by residues 166 to 173 (GMPNAGKS), 191 to 195 (FTTLV), 213 to 216 (DIPG), 283 to 286 (NKAD), and 314 to 316 (SAY). Serine 173 and threonine 193 together coordinate Mg(2+).

This sequence belongs to the TRAFAC class OBG-HflX-like GTPase superfamily. OBG GTPase family. As to quaternary structure, monomer. Mg(2+) serves as cofactor.

The protein localises to the cytoplasm. In terms of biological role, an essential GTPase which binds GTP, GDP and possibly (p)ppGpp with moderate affinity, with high nucleotide exchange rates and a fairly low GTP hydrolysis rate. Plays a role in control of the cell cycle, stress response, ribosome biogenesis and in those bacteria that undergo differentiation, in morphogenesis control. In Shewanella halifaxensis (strain HAW-EB4), this protein is GTPase Obg.